The primary structure comprises 101 residues: Small ribosomal subunit protein uS14 (101 aa).

The tract at residues 53–72 is disordered; the sequence is RDAAAVRVRNRDSHDGRPRG. A compositionally biased stretch (basic and acidic residues) spans 61–70; sequence RNRDSHDGRP.

Belongs to the universal ribosomal protein uS14 family. Part of the 30S ribosomal subunit. Contacts proteins S3 and S10.

Binds 16S rRNA, required for the assembly of 30S particles and may also be responsible for determining the conformation of the 16S rRNA at the A site. In Corynebacterium glutamicum (strain ATCC 13032 / DSM 20300 / JCM 1318 / BCRC 11384 / CCUG 27702 / LMG 3730 / NBRC 12168 / NCIMB 10025 / NRRL B-2784 / 534), this protein is Small ribosomal subunit protein uS14.